A 321-amino-acid chain; its full sequence is tRNA-5-methyluridine(54) 2-sulfurtransferase (321 aa).

Cys-3, Cys-6, Cys-22, and His-25 together coordinate Zn(2+). Residues Ala-53–Ser-55, Asp-59, and Ile-79 each bind ATP. [4Fe-4S] cluster-binding residues include Cys-130 and Cys-133. A Glycyl lysine isopeptide (Lys-Gly) (interchain with G-Cter in TtuB) cross-link involves residue Lys-137. Residues Gly-156 and Asp-161 each contribute to the ATP site. Cys-222 serves as a coordination point for [4Fe-4S] cluster. Glycyl lysine isopeptide (Lys-Gly) (interchain with G-Cter in TtuB) cross-links involve residues Lys-226 and Lys-229. Zn(2+) is bound by residues Cys-274, Cys-277, Cys-286, and Cys-289.

Belongs to the TtcA family. TtuA subfamily. Homodimer. Is able to form a heterocomplex with TtuB. Requires [4Fe-4S] cluster as cofactor. It depends on Mg(2+) as a cofactor. Conjugated to TtuB via covalent linkages involving Lys-137, Lys-226 and Lys-229.

It catalyses the reaction [TtuB sulfur-carrier protein]-C-terminal-Gly-aminoethanethioate + 5-methyluridine(54) in tRNA + ATP + H2O = [TtuB sulfur-carrier protein]-C-terminal Gly-Gly + 5-methyl-2-thiouridine(54) in tRNA + AMP + diphosphate + H(+). It functions in the pathway tRNA modification. Enzymatic activity may be regulated by TtuB conjugation. Catalyzes the ATP-dependent 2-thiolation of 5-methyluridine residue at position 54 in the T loop of tRNAs, leading to 5-methyl-2-thiouridine (m(5)s(2)U or s(2)T). This modification allows thermal stabilization of tRNAs in thermophilic microorganisms, and is required for cell growth at high temperatures. TtuA transfers the S atom from the thiocarboxylated C-terminus of TtuB to tRNA. The protein is tRNA-5-methyluridine(54) 2-sulfurtransferase of Thermus thermophilus (strain ATCC BAA-163 / DSM 7039 / HB27).